A 348-amino-acid chain; its full sequence is WD repeat-containing protein JIP5 (348 aa).

WD repeat units follow at residues 5 to 44 (KLKN…GETS), 51 to 90 (PSKR…MTRE), 94 to 132 (AHEC…SIRT), 135 to 174 (QHFD…STPL), 179 to 218 (DQED…ADSV), 223 to 261 (GHPA…FLGV), and 264 to 304 (THEE…EDSD). A compositionally biased stretch (acidic residues) spans 299–318 (LFEDSDEDDEMEEDEPDSDE). The segment at 299–348 (LFEDSDEDDEMEEDEPDSDEEKSKKKKKDNGMKDMSRGQAENDGSFFADL) is disordered.

The protein belongs to the WD repeat WDR55 family.

The protein localises to the nucleus. Its subcellular location is the nucleolus. The polypeptide is WD repeat-containing protein JIP5 (JIP5) (Cryptococcus neoformans var. neoformans serotype D (strain JEC21 / ATCC MYA-565) (Filobasidiella neoformans)).